The chain runs to 733 residues: Sulfate transporter (733 aa).

The segment covering 1–18 (MSLKNEEQNDLSPKDSVK) has biased composition (basic and acidic residues). A disordered region spans residues 1 to 37 (MSLKNEEQNDLSPKDSVKGNDQYRAPSGIHLEREEES). Phosphoserine is present on residues S12 and S16. The next 2 membrane-spanning stretches (helical) occupy residues 113 to 133 (VMSG…YSLL) and 138 to 158 (PIYG…LGTS). An N-linked (GlcNAc...) asparagine glycan is attached at N194. 6 helical membrane passes run 214–234 (IIVG…MGFF), 237–257 (GFVS…GASF), 379–399 (IDAI…SEMF), 415–435 (AIGF…SAAL), 453–473 (VMTA…FFSL), and 519–539 (LIST…CVIL). An STAS domain is found at 563–714 (AYKNLQAKSG…SVYEAMTFAE (152 aa)).

This sequence belongs to the SLC26A/SulP transporter (TC 2.A.53) family. In terms of processing, N-glycosylated.

It localises to the cell membrane. Its subcellular location is the apical cell membrane. The enzyme catalyses oxalate(in) + sulfate(out) = oxalate(out) + sulfate(in). The catalysed reaction is sulfate(out) + 2 chloride(in) = sulfate(in) + 2 chloride(out). It catalyses the reaction oxalate(out) + 2 chloride(in) = oxalate(in) + 2 chloride(out). It carries out the reaction bromide(in) + chloride(out) = bromide(out) + chloride(in). The enzyme catalyses nitrate(in) + chloride(out) = nitrate(out) + chloride(in). The catalysed reaction is iodide(in) + chloride(out) = iodide(out) + chloride(in). Functionally, sulfate transporter which mediates sulfate uptake into chondrocytes in order to maintain adequate sulfation of proteoglycans which is needed for cartilage development. Mediates electroneutral anion exchange of sulfate ions for oxalate ions, sulfate and oxalate ions for chloride and/or hydroxyl ions and chloride ions for bromide, iodide and nitrate ions. The coupling of sulfate transport to both hydroxyl and chloride ions likely serves to ensure transport at both acidic pH when most sulfate uptake is mediated by sulfate-hydroxide exchange and alkaline pH when most sulfate uptake is mediated by sulfate-chloride exchange. Essential for chondrocyte proliferation, differentiation and cell size expansion. The sequence is that of Sulfate transporter (SLC26A2) from Bubalus bubalis (Domestic water buffalo).